The primary structure comprises 321 residues: Glycolipid transfer protein domain-containing protein 2 (321 aa).

This sequence belongs to the GLTP family.

The protein is Glycolipid transfer protein domain-containing protein 2 (Gltpd2) of Mus musculus (Mouse).